Here is a 351-residue protein sequence, read N- to C-terminus: ATP-dependent 6-phosphofructokinase subunit gamma (351 aa).

Heterododecamer of 4 alpha, 4 beta and 4 gamma chains. The gamma chain bridges the N-terminal halves of the alpha and beta subunits.

The protein localises to the cytoplasm. It functions in the pathway carbohydrate degradation; glycolysis; D-glyceraldehyde 3-phosphate and glycerone phosphate from D-glucose: step 3/4. Functionally, structural subunit of pyrophosphate--fructose 6-phosphate 1-phosphotransferase. Not required for catalytic activity. Fine-tunes allosteric regulation of the ATP-PFK by ATP, fructose 2,6-bisphosphate and AMP. The polypeptide is ATP-dependent 6-phosphofructokinase subunit gamma (PFK3) (Komagataella pastoris (Yeast)).